Reading from the N-terminus, the 287-residue chain is MKKLPTILLASSLLLAACGNNSHSDDNSNKDKQSQSSKGENKASLQKATKEYEKYTDGQLDKFLDGTEKFVAAIKADDMDKAKELYPKVRMYYERSEPVAEAFGDLDPKIDARLADMKEEKKEDQWTGYHKIEKSLYQDNKIDETTKKDADQLLKDAKELDAKADTLDITPKLMLQGSVDLLNEVSTSKITGEEEIYSHTDLYDFKANIEGAQKIYELFKPELNKKDKKLSADIQKNFDKVNQLLDKYKDGDGFKDYSAVTKEDRKALSDAVNSLGEPLSKMAVVTE.

The N-terminal stretch at 1-17 (MKKLPTILLASSLLLAA) is a signal peptide. Residue Cys18 is the site of N-palmitoyl cysteine attachment. Cys18 carries S-diacylglycerol cysteine lipidation. A disordered region spans residues 20–50 (NNSHSDDNSNKDKQSQSSKGENKASLQKATK). Positions 23 to 33 (HSDDNSNKDKQ) are enriched in basic and acidic residues.

Belongs to the EfeM/EfeO family.

The protein resides in the cell membrane. The chain is Efem/EfeO family lipoprotein from Staphylococcus haemolyticus (strain JCSC1435).